The following is a 526-amino-acid chain: Outer capsid protein VP5 (526 aa).

The segment at 1–42 is involved in membrane permeabilization; it reads MGKIIKSLSRFGKKVGNALTSNTAKKIYSTIGKAAERFAESE.

Belongs to the orbivirus VP5 family.

Its subcellular location is the virion. In terms of biological role, VP5 protein is one of the two proteins (with VP2) which constitute the virus particle outer capsid. Acts as a membrane permeabilization protein that mediates release of viral particles from endosomal compartments into the cytoplasm. Permeabilization activity is probably negatively regulated by VP2 and is triggered by endosomal degradation of VP2 and exposure to low pH. In Bluetongue virus 11 (isolate USA) (BTV 11), this protein is Outer capsid protein VP5 (Segment-6).